The chain runs to 376 residues: O-demethylpuromycin-O-methyltransferase (376 aa).

Positions 1–28 (MAPTEATRGGPADPAPAPEAHRGGHTEH) are disordered. Residues 19–28 (EAHRGGHTEH) show a composition bias toward basic and acidic residues. S-adenosyl-L-methionine-binding positions include D235 and 261–263 (GDF). H281 serves as the catalytic Proton acceptor.

It belongs to the class I-like SAM-binding methyltransferase superfamily. Cation-independent O-methyltransferase family.

The catalysed reaction is O-demethylpuromycin + S-adenosyl-L-methionine = puromycin + S-adenosyl-L-homocysteine + H(+). In Streptomyces alboniger, this protein is O-demethylpuromycin-O-methyltransferase (dmpM).